Here is a 179-residue protein sequence, read N- to C-terminus: Adenine phosphoribosyltransferase (179 aa).

The protein belongs to the purine/pyrimidine phosphoribosyltransferase family. As to quaternary structure, homodimer.

The protein localises to the cytoplasm. It catalyses the reaction AMP + diphosphate = 5-phospho-alpha-D-ribose 1-diphosphate + adenine. The protein operates within purine metabolism; AMP biosynthesis via salvage pathway; AMP from adenine: step 1/1. Functionally, catalyzes a salvage reaction resulting in the formation of AMP, that is energically less costly than de novo synthesis. This chain is Adenine phosphoribosyltransferase, found in Dinoroseobacter shibae (strain DSM 16493 / NCIMB 14021 / DFL 12).